A 192-amino-acid polypeptide reads, in one-letter code: GTP cyclohydrolase 1 (192 aa).

Residues C81, H84, and C153 each contribute to the Zn(2+) site.

It belongs to the GTP cyclohydrolase I family. Toroid-shaped homodecamer, composed of two pentamers of five dimers.

It catalyses the reaction GTP + H2O = 7,8-dihydroneopterin 3'-triphosphate + formate + H(+). It participates in cofactor biosynthesis; 7,8-dihydroneopterin triphosphate biosynthesis; 7,8-dihydroneopterin triphosphate from GTP: step 1/1. This is GTP cyclohydrolase 1 from Streptococcus mutans serotype c (strain ATCC 700610 / UA159).